The following is a 368-amino-acid chain: Tetraacyldisaccharide 4'-kinase (368 aa).

Thr66–Thr73 serves as a coordination point for ATP.

It belongs to the LpxK family.

It catalyses the reaction a lipid A disaccharide + ATP = a lipid IVA + ADP + H(+). It functions in the pathway glycolipid biosynthesis; lipid IV(A) biosynthesis; lipid IV(A) from (3R)-3-hydroxytetradecanoyl-[acyl-carrier-protein] and UDP-N-acetyl-alpha-D-glucosamine: step 6/6. In terms of biological role, transfers the gamma-phosphate of ATP to the 4'-position of a tetraacyldisaccharide 1-phosphate intermediate (termed DS-1-P) to form tetraacyldisaccharide 1,4'-bis-phosphate (lipid IVA). In Desulfatibacillum aliphaticivorans, this protein is Tetraacyldisaccharide 4'-kinase.